Consider the following 68-residue polypeptide: MNTDQQKVSEIFQSSKEKLQGDAKVVSDAFKKMASQDKDGKTTDADESEKHNYQEQYNKLKGAGHKKE.

Methionine 1 carries the post-translational modification N-acetylmethionine. A compositionally biased stretch (polar residues) spans 1–14; that stretch reads MNTDQQKVSEIFQS. 2 disordered regions span residues 1–21 and 33–68; these read MNTD…KLQG and MASQ…HKKE. An inhibitory domain region spans residues 1 to 32; it reads MNTDQQKVSEIFQSSKEKLQGDAKVVSDAFKK. Residues 33–53 are compositionally biased toward basic and acidic residues; it reads MASQDKDGKTTDADESEKHNY.

It belongs to the protease inhibitor I34 family.

Functionally, specific and potent inhibitor for yeast aspartic protease A (yscA). The proteinase acts as a folding template stabilizing the helical conformation in the inhibitor, which results in the potent and specific blockage of the proteolytic activity. This chain is Protease A inhibitor 3 (PAI3), found in Saccharomyces cerevisiae (strain ATCC 204508 / S288c) (Baker's yeast).